The sequence spans 34 residues: Photosystem II reaction center protein M (34 aa).

Residues 5–25 (ILAFIATALFILVPTAFLLII) form a helical membrane-spanning segment.

It belongs to the PsbM family. PSII is composed of 1 copy each of membrane proteins PsbA, PsbB, PsbC, PsbD, PsbE, PsbF, PsbH, PsbI, PsbJ, PsbK, PsbL, PsbM, PsbT, PsbX, PsbY, PsbZ, Psb30/Ycf12, at least 3 peripheral proteins of the oxygen-evolving complex and a large number of cofactors. It forms dimeric complexes.

It localises to the plastid. Its subcellular location is the chloroplast thylakoid membrane. Its function is as follows. One of the components of the core complex of photosystem II (PSII). PSII is a light-driven water:plastoquinone oxidoreductase that uses light energy to abstract electrons from H(2)O, generating O(2) and a proton gradient subsequently used for ATP formation. It consists of a core antenna complex that captures photons, and an electron transfer chain that converts photonic excitation into a charge separation. This subunit is found at the monomer-monomer interface. The protein is Photosystem II reaction center protein M of Ceratophyllum demersum (Rigid hornwort).